The following is a 383-amino-acid chain: Beta-1,3-galactosyltransferase 4 (383 aa).

Residues 1–8 are Cytoplasmic-facing; sequence MPLSLFRR. The chain crosses the membrane as a helical span at residues 9–29; it reads LLLAALLLVIIWTLFGPSGIG. Over 30-383 the chain is Lumenal; sequence EELLSLSLAS…RCRVIAWLHS (354 aa). Asparagine 149 carries N-linked (GlcNAc...) asparagine glycosylation.

It belongs to the glycosyltransferase 31 family.

Its subcellular location is the golgi apparatus membrane. The enzyme catalyses a ganglioside GM2 (d18:1(4E)) + UDP-alpha-D-galactose = a ganglioside GM1 (d18:1(4E)) + UDP + H(+). The catalysed reaction is a ganglioside GM2 + UDP-alpha-D-galactose = a ganglioside GM1 + UDP + H(+). It catalyses the reaction a ganglioside GD2 (d18:1(4E)) + UDP-alpha-D-galactose = a ganglioside GD1b (d18:1(4E)) + UDP + H(+). It carries out the reaction a ganglioside GA2 (d18:1(4E)) + UDP-alpha-D-galactose = a ganglioside GA1 (d18:1(4E)) + UDP + H(+). The protein operates within protein modification; protein glycosylation. Involved in GM1/GD1B/GA1 ganglioside biosynthesis. This Canis lupus familiaris (Dog) protein is Beta-1,3-galactosyltransferase 4 (B3GALT4).